Consider the following 966-residue polypeptide: Glycine dehydrogenase (decarboxylating) (966 aa).

An N6-(pyridoxal phosphate)lysine modification is found at Lys-713.

The protein belongs to the GcvP family. As to quaternary structure, the glycine cleavage system is composed of four proteins: P, T, L and H. It depends on pyridoxal 5'-phosphate as a cofactor.

It catalyses the reaction N(6)-[(R)-lipoyl]-L-lysyl-[glycine-cleavage complex H protein] + glycine + H(+) = N(6)-[(R)-S(8)-aminomethyldihydrolipoyl]-L-lysyl-[glycine-cleavage complex H protein] + CO2. Its function is as follows. The glycine cleavage system catalyzes the degradation of glycine. The P protein binds the alpha-amino group of glycine through its pyridoxal phosphate cofactor; CO(2) is released and the remaining methylamine moiety is then transferred to the lipoamide cofactor of the H protein. The protein is Glycine dehydrogenase (decarboxylating) of Psychromonas ingrahamii (strain DSM 17664 / CCUG 51855 / 37).